We begin with the raw amino-acid sequence, 947 residues long: Probable outer membrane protein pmp19 (947 aa).

A signal peptide spans 1-19; it reads MKQMRLWGFLFLSSFCQVS. The Autotransporter domain maps to 672–947; the sequence is IPLQHLCVFG…NAHAGLSLSF (276 aa).

This sequence belongs to the PMP outer membrane protein family.

The protein localises to the secreted. It localises to the cell wall. The protein resides in the cell outer membrane. The chain is Probable outer membrane protein pmp19 (pmp19) from Chlamydia pneumoniae (Chlamydophila pneumoniae).